The chain runs to 264 residues: uncharacterized protein (264 aa).

A helical transmembrane segment spans residues 7–27 (LTLGICLVLLIILIVGYVIMT).

The protein belongs to the staphylococcal tandem lipoprotein family.

Its subcellular location is the cell membrane. This is an uncharacterized protein from Staphylococcus aureus (strain MW2).